The following is a 954-amino-acid chain: Xylanolytic transcriptional activator xlnR (954 aa).

Disordered stretches follow at residues 1 to 39 and 51 to 93; these read MSTT…LAEG and REAA…SQRD. Residues 8–21 show a composition bias toward low complexity; sequence HFPHSYSPFSSSRS. The segment covering 22-33 has biased composition (polar residues); that stretch reads LNRMAQSQTSGL. Over residues 64 to 78 the composition is skewed to basic and acidic residues; that stretch reads GKPKDQFQVDNDNHH. A compositionally biased stretch (polar residues) spans 82 to 91; the sequence is SLSNFKNPSQ. A DNA-binding region (zn(2)-C6 fungal-type) is located at residues 119-145; sequence CDQCNQLRTKCDGQNPCAHCIDFGLTC. 4 disordered regions span residues 173-226, 310-333, 566-607, and 758-777; these read ATNS…HSEA, LMNP…TENP, ELPP…PGNT, and MDGS…STVE. Residues 174 to 183 are compositionally biased toward polar residues; the sequence is TNSGQPNGSS. The span at 574 to 590 shows a compositional bias: basic and acidic residues; that stretch reads ARPDAERDGDPDADLSK. Residues 764–777 show a composition bias toward polar residues; the sequence is NHVSPSGRSSSTVE.

It belongs to the xlnR/xlr1 family.

The protein resides in the nucleus. In terms of biological role, transcriptional activator of the xylanolytic system. Involved in the regulation of extracellular cellulolytic and xylanolytic genes and in the regulation of the intracellular activities of D-xylose catabolic genes in the pentose catabolic pathway (PCP) in response to the presence of D-xylose. The sequence is that of Xylanolytic transcriptional activator xlnR (xlnR) from Aspergillus fumigatus (strain ATCC MYA-4609 / CBS 101355 / FGSC A1100 / Af293) (Neosartorya fumigata).